Reading from the N-terminus, the 380-residue chain is Cytochrome b (380 aa).

A run of 4 helical transmembrane segments spans residues 34–54, 78–99, 114–134, and 179–199; these read FGSL…LLAM, WLIR…YLHI, WNTG…GYVL, and FFAL…IHLT. Residues His-84 and His-98 each contribute to the heme b site. 2 residues coordinate heme b: His-183 and His-197. His-202 lines the a ubiquinone pocket. The next 4 helical transmembrane spans lie at 227–247, 289–309, 321–341, and 348–368; these read LKDI…ALFS, LGGV…PFLH, LSQL…WVGS, and FIII…ILFP.

The protein belongs to the cytochrome b family. In terms of assembly, the cytochrome bc1 complex contains 11 subunits: 3 respiratory subunits (MT-CYB, CYC1 and UQCRFS1), 2 core proteins (UQCRC1 and UQCRC2) and 6 low-molecular weight proteins (UQCRH/QCR6, UQCRB/QCR7, UQCRQ/QCR8, UQCR10/QCR9, UQCR11/QCR10 and a cleavage product of UQCRFS1). This cytochrome bc1 complex then forms a dimer. Heme b serves as cofactor.

The protein localises to the mitochondrion inner membrane. Component of the ubiquinol-cytochrome c reductase complex (complex III or cytochrome b-c1 complex) that is part of the mitochondrial respiratory chain. The b-c1 complex mediates electron transfer from ubiquinol to cytochrome c. Contributes to the generation of a proton gradient across the mitochondrial membrane that is then used for ATP synthesis. This is Cytochrome b (MT-CYB) from Ardenna tenuirostris (Short-tailed shearwater).